Reading from the N-terminus, the 728-residue chain is Dehydrocurvularin biosynthesis regulator (728 aa).

Residues C28–C58 constitute a DNA-binding region (zn(2)-C6 fungal-type). Disordered regions lie at residues G75 to R130 and Q606 to A626. Residues R89–E109 show a composition bias toward polar residues.

Its subcellular location is the nucleus. Transcription factor involved in regulation of the dehydrocurvularin biosynthesis gene cluster. This chain is Dehydrocurvularin biosynthesis regulator, found in Aspergillus terreus.